The chain runs to 174 residues: UBX domain-containing protein 5 (174 aa).

Positions 8–58 form a coiled coil; it reads QKEKFAEDRALLSQQNKEYAESLAKDIAKKEEKDKIRFEAEQKELRKKTIQ. Residues 74-120 form the UBX domain; that stretch reads RLLVRYPNGSRLILSFSPSQPMTSLFDAIILNPACPDYFSVRSVYPR.

Forms a complex composed of deubiquitinating enzyme atx-3, adapter ubxn-5 and cdc-48.1. Interacts with atx-3 (via C-terminus). Interacts with cdc-48.1 (via N-terminus) and cdc-48.2. Specifically expressed in the germline.

Its function is as follows. Probably acts as an adapter for ATPase cdc-48.1 and/or cdc-48.2, conferring substrate specificity. Unlike other UBX domain-containing protein does not bind 'Lys-48'-polyubiquitinated chain. In Caenorhabditis elegans, this protein is UBX domain-containing protein 5.